A 274-amino-acid chain; its full sequence is NAD kinase (274 aa).

Asp59 acts as the Proton acceptor in catalysis. NAD(+) is bound by residues 59–60 (DG), 133–134 (ND), Arg144, Asp163, 174–179 (TAYALS), and Gln233.

It belongs to the NAD kinase family. It depends on a divalent metal cation as a cofactor.

The protein localises to the cytoplasm. The enzyme catalyses NAD(+) + ATP = ADP + NADP(+) + H(+). Involved in the regulation of the intracellular balance of NAD and NADP, and is a key enzyme in the biosynthesis of NADP. Catalyzes specifically the phosphorylation on 2'-hydroxyl of the adenosine moiety of NAD to yield NADP. The chain is NAD kinase from Aquifex aeolicus (strain VF5).